The sequence spans 416 residues: UDP-N-acetylglucosamine 1-carboxyvinyltransferase (416 aa).

Residue 22–23 (KN) coordinates phosphoenolpyruvate. Arg91 contacts UDP-N-acetyl-alpha-D-glucosamine. Cys115 functions as the Proton donor in the catalytic mechanism. Cys115 carries the post-translational modification 2-(S-cysteinyl)pyruvic acid O-phosphothioketal. Residues 120–124 (RPIDL), Asp305, and Ile327 each bind UDP-N-acetyl-alpha-D-glucosamine.

This sequence belongs to the EPSP synthase family. MurA subfamily.

The protein localises to the cytoplasm. It carries out the reaction phosphoenolpyruvate + UDP-N-acetyl-alpha-D-glucosamine = UDP-N-acetyl-3-O-(1-carboxyvinyl)-alpha-D-glucosamine + phosphate. The protein operates within cell wall biogenesis; peptidoglycan biosynthesis. Cell wall formation. Adds enolpyruvyl to UDP-N-acetylglucosamine. The sequence is that of UDP-N-acetylglucosamine 1-carboxyvinyltransferase from Buchnera aphidicola subsp. Acyrthosiphon pisum (strain APS) (Acyrthosiphon pisum symbiotic bacterium).